A 211-amino-acid chain; its full sequence is UPF0329 protein ECU07_1880/ECU10_0020 (211 aa).

Belongs to the UPF0329 family.

This is UPF0329 protein ECU07_1880/ECU10_0020 from Encephalitozoon cuniculi (strain GB-M1) (Microsporidian parasite).